The primary structure comprises 570 residues: Membrane protein insertase YidC (570 aa).

The segment covering 31–60 (QQPVAQTPSVTIDSNGADSSALLNSPNTGE) has biased composition (polar residues). Positions 31 to 79 (QQPVAQTPSVTIDSNGADSSALLNSPNTGELDTPETASKPATAEDSNIS) are disordered. 5 consecutive transmembrane segments (helical) span residues 230-250 (PTFS…STPE), 378-398 (WGIA…HLSA), 444-464 (LGGC…YWVL), 487-507 (PYFV…SLNP), and 522-542 (PIIF…YWLV).

Belongs to the OXA1/ALB3/YidC family. Type 1 subfamily. Interacts with the Sec translocase complex via SecD. Specifically interacts with transmembrane segments of nascent integral membrane proteins during membrane integration.

It localises to the cell inner membrane. Its function is as follows. Required for the insertion and/or proper folding and/or complex formation of integral membrane proteins into the membrane. Involved in integration of membrane proteins that insert both dependently and independently of the Sec translocase complex, as well as at least some lipoproteins. Aids folding of multispanning membrane proteins. This chain is Membrane protein insertase YidC, found in Hahella chejuensis (strain KCTC 2396).